The following is a 331-amino-acid chain: RNA 3'-terminal phosphate cyclase (331 aa).

Residues Q100 and 276–280 (HLADQ) contribute to the ATP site. H301 functions as the Tele-AMP-histidine intermediate in the catalytic mechanism.

It belongs to the RNA 3'-terminal cyclase family. Type 1 subfamily.

The protein localises to the cytoplasm. The catalysed reaction is a 3'-end 3'-phospho-ribonucleotide-RNA + ATP = a 3'-end 2',3'-cyclophospho-ribonucleotide-RNA + AMP + diphosphate. In terms of biological role, catalyzes the conversion of 3'-phosphate to a 2',3'-cyclic phosphodiester at the end of RNA. The mechanism of action of the enzyme occurs in 3 steps: (A) adenylation of the enzyme by ATP; (B) transfer of adenylate to an RNA-N3'P to produce RNA-N3'PP5'A; (C) and attack of the adjacent 2'-hydroxyl on the 3'-phosphorus in the diester linkage to produce the cyclic end product. The biological role of this enzyme is unknown but it is likely to function in some aspects of cellular RNA processing. This is RNA 3'-terminal phosphate cyclase from Methanosarcina barkeri (strain Fusaro / DSM 804).